The following is a 371-amino-acid chain: Putative glutamate--cysteine ligase 2 (371 aa).

The protein belongs to the glutamate--cysteine ligase type 2 family. YbdK subfamily.

The catalysed reaction is L-cysteine + L-glutamate + ATP = gamma-L-glutamyl-L-cysteine + ADP + phosphate + H(+). Its function is as follows. ATP-dependent carboxylate-amine ligase which exhibits weak glutamate--cysteine ligase activity. The polypeptide is Putative glutamate--cysteine ligase 2 (Paraburkholderia xenovorans (strain LB400)).